A 94-amino-acid polypeptide reads, in one-letter code: MKDIYQVIKKVRISEKATMLQETTGELVFEVDRDANKIEIKKAVEVAFGKKVASVRTANYDGKLKRQRRSDAGRTAHWKKAYVKLANGETLDLV.

This sequence belongs to the universal ribosomal protein uL23 family. Part of the 50S ribosomal subunit. Contacts protein L29, and trigger factor when it is bound to the ribosome.

In terms of biological role, one of the early assembly proteins it binds 23S rRNA. One of the proteins that surrounds the polypeptide exit tunnel on the outside of the ribosome. Forms the main docking site for trigger factor binding to the ribosome. This chain is Large ribosomal subunit protein uL23, found in Akkermansia muciniphila (strain ATCC BAA-835 / DSM 22959 / JCM 33894 / BCRC 81048 / CCUG 64013 / CIP 107961 / Muc).